Reading from the N-terminus, the 506-residue chain is MEEFKRNLELDRSQQHDFIYPLIFQEYIYALAHDRGLNRSIFLENTGYENKSSLLIVKRLIIHLITQMYQQNHFLFSGNDSNQNKFLGYNTNLYSQMIFEGFAVVVEIPFYLRLLSFLEGKERVKSHNLRSIHSIFPFLEDKFSHLVYVLDILISHPIHLEIVIQTLRYWVKDASSLHLLRFFLHEYPIWNSLITPKKSSFSFSIRNQRFFLFLYNFHVCEYESIFVFLRNQSSHLRSISSETFLERISFYRKIELEVFTKDFKAIIWVFKEPFLHYVRYRGKAILASKGTSLLMNKWKYYLVNFWQCYFYMWSQPRRIHINQLSNHSLDFLGYLSTVRLKPLMVRSQMIENSFIIENASKKFDTLMPITPMIRSLSKAKFCNVLGHPMSKPVWAALSDSDIIERFGRIYRNLSHYYSGSLKKMSLYRIKYILRLSCARTLARKHKSTVRAFLKRLGVGLLEEFFTEEEQVFYLTFAKASSNSGELYQRRVWYLDIICINDLANYE.

Belongs to the intron maturase 2 family. MatK subfamily.

It is found in the plastid. Its subcellular location is the chloroplast. Its function is as follows. Usually encoded in the trnK tRNA gene intron. Probably assists in splicing its own and other chloroplast group II introns. This Rhododendron ferrugineum (Alpenrose) protein is Maturase K.